A 65-amino-acid chain; its full sequence is LTCVTKNTIFGITTENCPAGQNLCFKRWHYVIPRYTEITRGCAATCPIPENYDSIHCCKTDKCNE.

4 disulfide bridges follow: Cys3–Cys24, Cys17–Cys42, Cys46–Cys57, and Cys58–Cys63.

The protein belongs to the three-finger toxin family. Short-chain subfamily. Aminergic toxin sub-subfamily. As to expression, expressed by the venom gland.

It is found in the secreted. In terms of biological role, potent antagonist (IC(50)=1-10 nM) of M4 (CHRM4) muscarinic receptors, and CHRM1, ADRA1A, ADRA2A and ADRA2C adrenergic receptors. Also antagonises ADRA1B and ADRA1D adrenergic receptors with a 10-times lower affinity. This chain is Muscarinic toxin 3, found in Dendroaspis angusticeps (Eastern green mamba).